The following is a 248-amino-acid chain: ATP synthase subunit a (248 aa).

Positions 1–3 (MLY) are cleaved as a propeptide — removed in mature form. The next 7 helical transmembrane spans lie at 24 to 44 (MSLT…FFIF), 86 to 106 (IYMP…LVGL), 117 to 137 (FALP…IGFV), 146 to 166 (VLLP…VELL), 183 to 203 (ITSG…TSGI), 205 to 225 (LLFV…ELIV), and 227 to 247 (ILQA…SLIL).

The protein belongs to the ATPase A chain family. As to quaternary structure, F-type ATPases have 2 components, CF(1) - the catalytic core - and CF(0) - the membrane proton channel. CF(1) has five subunits: alpha(3), beta(3), gamma(1), delta(1), epsilon(1). CF(0) has three main subunits: a, b and c.

It localises to the mitochondrion inner membrane. Its function is as follows. Mitochondrial membrane ATP synthase (F(1)F(0) ATP synthase or Complex V) produces ATP from ADP in the presence of a proton gradient across the membrane which is generated by electron transport complexes of the respiratory chain. F-type ATPases consist of two structural domains, F(1) - containing the extramembraneous catalytic core and F(0) - containing the membrane proton channel, linked together by a central stalk and a peripheral stalk. During catalysis, ATP synthesis in the catalytic domain of F(1) is coupled via a rotary mechanism of the central stalk subunits to proton translocation. Key component of the proton channel; it may play a direct role in the translocation of protons across the membrane. This chain is ATP synthase subunit a, found in Zancudomyces culisetae (Gut fungus).